Here is a 141-residue protein sequence, read N- to C-terminus: Hemoglobin subunit alpha (141 aa).

The Globin domain maps to 1 to 141; the sequence is VLSPADKTNV…VSTVLTSKYR (141 aa). S3 bears the Phosphoserine mark. N6-succinyllysine is present on K7. T8 bears the Phosphothreonine mark. K11 is modified (N6-succinyllysine). An N6-acetyllysine; alternate modification is found at K16. Position 16 is an N6-succinyllysine; alternate (K16). At Y24 the chain carries Phosphotyrosine. S35 is modified (phosphoserine). Residue K40 is modified to N6-succinyllysine. S49 carries the post-translational modification Phosphoserine. Residue H58 coordinates O2. Position 87 (H87) interacts with heme b. S102 carries the post-translational modification Phosphoserine. Position 108 is a phosphothreonine (T108). Residues S124 and S131 each carry the phosphoserine modification. Phosphothreonine occurs at positions 134 and 137. A Phosphoserine modification is found at S138.

This sequence belongs to the globin family. In terms of assembly, heterotetramer of two alpha chains and two beta chains. As to expression, red blood cells.

In terms of biological role, involved in oxygen transport from the lung to the various peripheral tissues. Its function is as follows. Hemopressin acts as an antagonist peptide of the cannabinoid receptor CNR1. Hemopressin-binding efficiently blocks cannabinoid receptor CNR1 and subsequent signaling. The sequence is that of Hemoglobin subunit alpha (HBA) from Loris tardigradus (Slender loris).